A 161-amino-acid polypeptide reads, in one-letter code: Nucleotide-binding protein Nmul_A1044 (161 aa).

It belongs to the YajQ family.

Functionally, nucleotide-binding protein. This chain is Nucleotide-binding protein Nmul_A1044, found in Nitrosospira multiformis (strain ATCC 25196 / NCIMB 11849 / C 71).